The following is a 281-amino-acid chain: Elongation factor Ts (281 aa).

Residues 80–83 (TDFV) form an involved in Mg(2+) ion dislocation from EF-Tu region.

Belongs to the EF-Ts family.

The protein localises to the cytoplasm. In terms of biological role, associates with the EF-Tu.GDP complex and induces the exchange of GDP to GTP. It remains bound to the aminoacyl-tRNA.EF-Tu.GTP complex up to the GTP hydrolysis stage on the ribosome. The sequence is that of Elongation factor Ts from Vibrio atlanticus (strain LGP32) (Vibrio splendidus (strain Mel32)).